A 530-amino-acid polypeptide reads, in one-letter code: Type 2 DNA topoisomerase 6 subunit B (530 aa).

ATP contacts are provided by residues N42, D76, 96-98, 107-113, and K427; these read SSK and MYGLGVK.

The protein belongs to the TOP6B family. As to quaternary structure, homodimer. Heterotetramer of two Top6A and two Top6B chains.

It catalyses the reaction ATP-dependent breakage, passage and rejoining of double-stranded DNA.. Not inhibited by the DNA gyrase inhibitor novobiocin, instead inhibited by eukaryotic topoisomerase inhibitors such as m- and o-amsacrine, ellipticine, and the quinolone CP-115,953. Radicicol inhibits the ATPase activity. Functionally, relaxes both positive and negative supercoils and exhibits a strong decatenase and unknotting activity; it cannot introduce DNA supercoils. ATP is absolutely required for DNA cleavage; the nonhydrolyzable analog AMP-PNP generates nicked or linear products from a supercoiled dsDNA substrate. Generates staggered two-nucleotide long 5' overhangs. The enzyme is covalently attached transiently to the 5'-ends of the cleaved strands. The polypeptide is Type 2 DNA topoisomerase 6 subunit B (Saccharolobus shibatae (strain ATCC 51178 / DSM 5389 / JCM 8931 / NBRC 15437 / B12) (Sulfolobus shibatae)).